A 99-amino-acid chain; its full sequence is MVCVPCIIIPLLLYIWHKFVQPILLRYWNPWEKKDDDGNVIKKGPDFPFECKGGVCPFVPGGKKTENVSDDDAEESENPPLNATAMAAETEVDESKKEI.

Residues proline 60 to isoleucine 99 are disordered. Positions valine 68–glutamate 77 are enriched in acidic residues. Serine 69 carries the phosphoserine modification.

This sequence belongs to the UPF0729 family.

The protein is UPF0729 protein CG18508 of Drosophila melanogaster (Fruit fly).